Consider the following 201-residue polypeptide: 5'(3')-deoxyribonucleotidase, cytosolic type (201 aa).

Catalysis depends on D10, which acts as the Nucleophile. The Mg(2+) site is built by D10 and D12. Residue D12 is the Proton donor of the active site. Substrate contacts are provided by F18, F44, Y65, T99, and K134. D145 is a binding site for Mg(2+). Residue S182 is modified to Phosphoserine.

Belongs to the 5'(3')-deoxyribonucleotidase family. In terms of assembly, homodimer. It depends on Mg(2+) as a cofactor. Detected in skeletal muscle, heart and pancreas.

It is found in the cytoplasm. Dephosphorylates the 5' and 2'(3')-phosphates of deoxyribonucleotides, with a preference for dUMP and dTMP, intermediate activity towards dGMP, and low activity towards dCMP and dAMP. This chain is 5'(3')-deoxyribonucleotidase, cytosolic type (NT5C), found in Homo sapiens (Human).